Reading from the N-terminus, the 230-residue chain is Ribose-5-phosphate isomerase A (230 aa).

Substrate is bound by residues Thr-29–Thr-32, Asp-85–Asp-88, and Lys-98–Gly-101. Glu-107 functions as the Proton acceptor in the catalytic mechanism. Lys-125 lines the substrate pocket.

Belongs to the ribose 5-phosphate isomerase family. In terms of assembly, homodimer.

The catalysed reaction is aldehydo-D-ribose 5-phosphate = D-ribulose 5-phosphate. It functions in the pathway carbohydrate degradation; pentose phosphate pathway; D-ribose 5-phosphate from D-ribulose 5-phosphate (non-oxidative stage): step 1/1. Catalyzes the reversible conversion of ribose-5-phosphate to ribulose 5-phosphate. This Staphylococcus haemolyticus (strain JCSC1435) protein is Ribose-5-phosphate isomerase A.